A 201-amino-acid chain; its full sequence is Protein GrpE (201 aa).

The interval 1-32 (MTDRDRQPEDTTAPTGEPVVSKPYIMPDDPEP) is disordered.

The protein belongs to the GrpE family. Homodimer.

The protein resides in the cytoplasm. Its function is as follows. Participates actively in the response to hyperosmotic and heat shock by preventing the aggregation of stress-denatured proteins, in association with DnaK and GrpE. It is the nucleotide exchange factor for DnaK and may function as a thermosensor. Unfolded proteins bind initially to DnaJ; upon interaction with the DnaJ-bound protein, DnaK hydrolyzes its bound ATP, resulting in the formation of a stable complex. GrpE releases ADP from DnaK; ATP binding to DnaK triggers the release of the substrate protein, thus completing the reaction cycle. Several rounds of ATP-dependent interactions between DnaJ, DnaK and GrpE are required for fully efficient folding. In Bradyrhizobium diazoefficiens (strain JCM 10833 / BCRC 13528 / IAM 13628 / NBRC 14792 / USDA 110), this protein is Protein GrpE.